The chain runs to 190 residues: Orotate phosphoribosyltransferase (190 aa).

Residue 114-122 participates in 5-phospho-alpha-D-ribose 1-diphosphate binding; sequence EDVITTGGS. Positions 118 and 146 each coordinate orotate.

Belongs to the purine/pyrimidine phosphoribosyltransferase family. PyrE subfamily. In terms of assembly, homodimer. Mg(2+) serves as cofactor.

The enzyme catalyses orotidine 5'-phosphate + diphosphate = orotate + 5-phospho-alpha-D-ribose 1-diphosphate. The protein operates within pyrimidine metabolism; UMP biosynthesis via de novo pathway; UMP from orotate: step 1/2. Its function is as follows. Catalyzes the transfer of a ribosyl phosphate group from 5-phosphoribose 1-diphosphate to orotate, leading to the formation of orotidine monophosphate (OMP). In Pelotomaculum thermopropionicum (strain DSM 13744 / JCM 10971 / SI), this protein is Orotate phosphoribosyltransferase.